The following is a 367-amino-acid chain: Phosphoribosylaminoimidazole-succinocarboxamide synthase (367 aa).

The protein belongs to the SAICAR synthetase family.

It carries out the reaction 5-amino-1-(5-phospho-D-ribosyl)imidazole-4-carboxylate + L-aspartate + ATP = (2S)-2-[5-amino-1-(5-phospho-beta-D-ribosyl)imidazole-4-carboxamido]succinate + ADP + phosphate + 2 H(+). It functions in the pathway purine metabolism; IMP biosynthesis via de novo pathway; 5-amino-1-(5-phospho-D-ribosyl)imidazole-4-carboxamide from 5-amino-1-(5-phospho-D-ribosyl)imidazole-4-carboxylate: step 1/2. The protein is Phosphoribosylaminoimidazole-succinocarboxamide synthase of Shewanella pealeana (strain ATCC 700345 / ANG-SQ1).